A 131-amino-acid chain; its full sequence is Global transcriptional regulator Spx 1 (131 aa).

Residues cysteine 10 and cysteine 13 are joined by a disulfide bond.

This sequence belongs to the ArsC family. Spx subfamily. Interacts with the C-terminal domain of the alpha subunit of the RNAP.

It localises to the cytoplasm. In terms of biological role, global transcriptional regulator that plays a key role in stress response and exerts either positive or negative regulation of genes. Acts by interacting with the C-terminal domain of the alpha subunit of the RNA polymerase (RNAP). This interaction can enhance binding of RNAP to the promoter region of target genes and stimulate their transcription, or block interaction of RNAP with activator. The chain is Global transcriptional regulator Spx 1 from Oceanobacillus iheyensis (strain DSM 14371 / CIP 107618 / JCM 11309 / KCTC 3954 / HTE831).